The chain runs to 495 residues: GTPase Der (495 aa).

2 EngA-type G domains span residues 3-166 (PVIA…MDAE) and 208-381 (IKLA…DCST). GTP is bound by residues 9-16 (GRPNVGKS), 56-60 (DTGGI), 118-121 (NKTD), 214-221 (GRPNVGKS), 261-265 (DTAGV), and 326-329 (NKWD). The KH-like domain maps to 382 to 466 (KRVGTSLLTR…PIRIQFKEGE (85 aa)).

It belongs to the TRAFAC class TrmE-Era-EngA-EngB-Septin-like GTPase superfamily. EngA (Der) GTPase family. In terms of assembly, associates with the 50S ribosomal subunit.

GTPase that plays an essential role in the late steps of ribosome biogenesis. The chain is GTPase Der from Yersinia pseudotuberculosis serotype O:3 (strain YPIII).